Here is a 72-residue protein sequence, read N- to C-terminus: Inner membrane protein YmgF (72 aa).

Over 1-9 the chain is Cytoplasmic; that stretch reads MNNSNNLDY. A helical transmembrane segment spans residues 10–30; that stretch reads FTLYIIFSIAFMLITLLVILI. At 31 to 34 the chain is on the periplasmic side; the sequence is AKPS. The helical transmembrane segment at 35 to 55 threads the bilayer; the sequence is TGLGEVLVTINLLNALVWLAI. Residues 56 to 72 lie on the Cytoplasmic side of the membrane; that stretch reads NLVNRLRERLVNHRDQQ.

In terms of assembly, interacts with FtsL, FtsQ, FtsI, FtsN, and probably many other cell division proteins.

Its subcellular location is the cell inner membrane. Could be involved in cell division. May participate in the stabilization of the cell divisome under specific conditions. In Escherichia coli (strain K12), this protein is Inner membrane protein YmgF (ymgF).